We begin with the raw amino-acid sequence, 191 residues long: 3-isopropylmalate dehydratase small subunit (191 aa).

It belongs to the LeuD family. LeuD type 1 subfamily. As to quaternary structure, heterodimer of LeuC and LeuD.

It catalyses the reaction (2R,3S)-3-isopropylmalate = (2S)-2-isopropylmalate. The protein operates within amino-acid biosynthesis; L-leucine biosynthesis; L-leucine from 3-methyl-2-oxobutanoate: step 2/4. Functionally, catalyzes the isomerization between 2-isopropylmalate and 3-isopropylmalate, via the formation of 2-isopropylmaleate. This chain is 3-isopropylmalate dehydratase small subunit, found in Anaeromyxobacter dehalogenans (strain 2CP-C).